A 205-amino-acid chain; its full sequence is Thiamine-phosphate synthase (205 aa).

Residues 34–38 (QLRCK) and asparagine 66 contribute to the 4-amino-2-methyl-5-(diphosphooxymethyl)pyrimidine site. Residues aspartate 67 and aspartate 86 each coordinate Mg(2+). Serine 105 contributes to the 4-amino-2-methyl-5-(diphosphooxymethyl)pyrimidine binding site. 131-133 (TTT) contributes to the 2-[(2R,5Z)-2-carboxy-4-methylthiazol-5(2H)-ylidene]ethyl phosphate binding site. Lysine 134 contributes to the 4-amino-2-methyl-5-(diphosphooxymethyl)pyrimidine binding site. A 2-[(2R,5Z)-2-carboxy-4-methylthiazol-5(2H)-ylidene]ethyl phosphate-binding site is contributed by glycine 163.

The protein belongs to the thiamine-phosphate synthase family. It depends on Mg(2+) as a cofactor.

It carries out the reaction 2-[(2R,5Z)-2-carboxy-4-methylthiazol-5(2H)-ylidene]ethyl phosphate + 4-amino-2-methyl-5-(diphosphooxymethyl)pyrimidine + 2 H(+) = thiamine phosphate + CO2 + diphosphate. It catalyses the reaction 2-(2-carboxy-4-methylthiazol-5-yl)ethyl phosphate + 4-amino-2-methyl-5-(diphosphooxymethyl)pyrimidine + 2 H(+) = thiamine phosphate + CO2 + diphosphate. The catalysed reaction is 4-methyl-5-(2-phosphooxyethyl)-thiazole + 4-amino-2-methyl-5-(diphosphooxymethyl)pyrimidine + H(+) = thiamine phosphate + diphosphate. It participates in cofactor biosynthesis; thiamine diphosphate biosynthesis; thiamine phosphate from 4-amino-2-methyl-5-diphosphomethylpyrimidine and 4-methyl-5-(2-phosphoethyl)-thiazole: step 1/1. Functionally, condenses 4-methyl-5-(beta-hydroxyethyl)thiazole monophosphate (THZ-P) and 2-methyl-4-amino-5-hydroxymethyl pyrimidine pyrophosphate (HMP-PP) to form thiamine monophosphate (TMP). The chain is Thiamine-phosphate synthase from Neisseria meningitidis serogroup A / serotype 4A (strain DSM 15465 / Z2491).